The chain runs to 687 residues: Amine oxidase [copper-containing] gamma 2 (687 aa).

The first 24 residues, 1-24 (MVELSFSQLLVLLLSLLFLFTTLA), serve as a signal peptide directing secretion. Asparagine 154 is a glycosylation site (N-linked (GlcNAc...) asparagine). Cysteine 169 and cysteine 191 form a disulfide bridge. Residue asparagine 244 is glycosylated (N-linked (GlcNAc...) asparagine). Residue 333 to 344 (YMDAGEFGLGPS) participates in substrate binding. The active-site Proton acceptor is aspartate 335. Cysteine 354 and cysteine 380 are joined by a disulfide. 420–425 (VGNYDY) serves as a coordination point for substrate. The Schiff-base intermediate with substrate; via topaquinone role is filled by tyrosine 423. Tyrosine 423 bears the 2',4',5'-topaquinone mark. Histidine 480 and histidine 482 together coordinate Cu cation. Residues aspartate 489, methionine 490, and aspartate 491 each contribute to the Mn(2+) site. Residues asparagine 497 and asparagine 598 are each glycosylated (N-linked (GlcNAc...) asparagine). Mn(2+) contacts are provided by aspartate 632 and isoleucine 633. Histidine 643 contacts Cu cation.

It belongs to the copper/topaquinone oxidase family. As to quaternary structure, homodimer. Cu cation is required as a cofactor. It depends on Zn(2+) as a cofactor. Requires L-topaquinone as cofactor. Mn(2+) serves as cofactor. In terms of processing, topaquinone (TPQ) is generated by copper-dependent autoxidation of a specific tyrosyl residue. In terms of tissue distribution, expressed in roots, leaves and cotyledons.

It localises to the secreted. Its subcellular location is the extracellular space. It is found in the apoplast. It carries out the reaction a primary methyl amine + O2 + H2O = an aldehyde + H2O2 + NH4(+). It functions in the pathway amine and polyamine degradation; putrescine degradation. Its function is as follows. Copper amine oxidase that can use putrescine and spermidine as substrates. The sequence is that of Amine oxidase [copper-containing] gamma 2 from Arabidopsis thaliana (Mouse-ear cress).